We begin with the raw amino-acid sequence, 430 residues long: Adenylosuccinate synthetase (430 aa).

GTP is bound by residues 12-18 (GDEGKGK) and 40-42 (GHT). D13 (proton acceptor) is an active-site residue. Residues D13 and G40 each contribute to the Mg(2+) site. IMP is bound by residues 13 to 16 (DEGK), 38 to 41 (NAGH), T128, R142, Q223, T238, and R302. Residue H41 is the Proton donor of the active site. GTP-binding positions include 330–332 (SID) and 412–414 (SVG).

The protein belongs to the adenylosuccinate synthetase family. As to quaternary structure, homodimer. Requires Mg(2+) as cofactor.

The protein localises to the cytoplasm. It carries out the reaction IMP + L-aspartate + GTP = N(6)-(1,2-dicarboxyethyl)-AMP + GDP + phosphate + 2 H(+). Its pathway is purine metabolism; AMP biosynthesis via de novo pathway; AMP from IMP: step 1/2. Plays an important role in the de novo pathway of purine nucleotide biosynthesis. Catalyzes the first committed step in the biosynthesis of AMP from IMP. In Bacillus subtilis (strain 168), this protein is Adenylosuccinate synthetase.